Reading from the N-terminus, the 295-residue chain is Protein SSO2 (295 aa).

At 1 to 269 the chain is on the cytoplasmic side; it reads MSNANPYENN…ARKARKNKIR (269 aa). A phosphoserine mark is found at Ser-31 and Ser-34. The stretch at 39-100 forms a coiled coil; the sequence is AFMNKINSIN…ATDLQYQLKA (62 aa). The 63-residue stretch at 194 to 256 folds into the t-SNARE coiled-coil homology domain; sequence LAEVQARHQE…EQGVGHTNKA (63 aa). A helical; Anchor for type IV membrane protein transmembrane segment spans residues 270–291; the sequence is CLIICFIIFAIVVVVVVVPSVV. Residues 292–295 are Extracellular-facing; sequence ETRK.

The protein belongs to the syntaxin family.

The protein resides in the membrane. Its function is as follows. Required for vesicle fusion with the plasma membrane. This Saccharomyces cerevisiae (strain ATCC 204508 / S288c) (Baker's yeast) protein is Protein SSO2 (SSO2).